A 307-amino-acid chain; its full sequence is Acyl transferase (307 aa).

Residues Ser116, Asp213, and His243 each act as charge relay system in the active site.

The protein belongs to the LuxD family.

It participates in lipid metabolism; fatty acid reduction for biolumincescence. Functionally, acyl transferase is part of the fatty acid reductase system required for aldehyde biosynthesis; it produces fatty acids for the luminescent reaction. This is Acyl transferase from Aliivibrio fischeri (strain ATCC 700601 / ES114) (Vibrio fischeri).